A 626-amino-acid chain; its full sequence is Chaperone protein HtpG (626 aa).

Residues 1 to 338 form an a; substrate-binding region; it reads MTANKNQKKT…SNDLPLNVSR (338 aa). The b stretch occupies residues 339–553; that stretch reads EILQDHKLVY…SNEMSTQMAK (215 aa). Residues 554–626 are c; the sequence is LFSAAGQTVP…ARINDLLINN (73 aa).

It belongs to the heat shock protein 90 family. Homodimer.

The protein resides in the cytoplasm. In terms of biological role, molecular chaperone. Has ATPase activity. The protein is Chaperone protein HtpG of Buchnera aphidicola subsp. Baizongia pistaciae (strain Bp).